Consider the following 268-residue polypeptide: Transcription initiation factor TFIID subunit 14b (268 aa).

Over residues 1–20 (MTNSSSSKKQAQDQPETSEP) the composition is skewed to polar residues. Positions 1-36 (MTNSSSSKKQAQDQPETSEPTLKSLKTKMTKSDEKQ) are disordered. The YEATS domain maps to 38-182 (KLKDIEISVP…ESFLARVQNH (145 aa)). Residues 229–263 (DELLQLAAARQQVQAHIAKLRRQISLLEGQNQTVK) are a coiled coil.

Belongs to the YAF9 family. Component of the TFIID complex. TFIID is composed of TATA binding protein (TBP) and a number of TBP-associated factors (TAFs) whose MWs range from 14-217 kDa. Interacts with TAF1, TAF4B and TAF12B. Component of the SWR1 chromatin-remodeling complex. Interacts with FLX, a component of the transcription activator complex FRI-C. Interacts with SWC4, and with EAF1A and EAF1B (via HSA domain). Expressed in roots, leaves, inflorescence and flowering tissues.

It localises to the cytoplasm. The protein localises to the nucleus. Functionally, negative regulator of flowering controlling the H4K5 acetylation levels in the FLC and FT chromatin. Positively regulates FLC expression. Component of the transcription factor IID (TFIID) complex that is essential for mediating regulation of RNA polymerase transcription. Component of the SWR1 complex which mediates the ATP-dependent exchange of histone H2A for the H2A variant HZT1 leading to transcriptional regulation of selected genes by chromatin remodeling. Component of a NuA4 histone acetyltransferase complex which is involved in transcriptional activation of selected genes principally by acetylation of nucleosomal histones H4 and H2A. This chain is Transcription initiation factor TFIID subunit 14b, found in Arabidopsis thaliana (Mouse-ear cress).